We begin with the raw amino-acid sequence, 468 residues long: 3-isopropylmalate dehydratase large subunit (468 aa).

3 residues coordinate [4Fe-4S] cluster: C347, C407, and C410.

Belongs to the aconitase/IPM isomerase family. LeuC type 1 subfamily. As to quaternary structure, heterodimer of LeuC and LeuD. It depends on [4Fe-4S] cluster as a cofactor.

It catalyses the reaction (2R,3S)-3-isopropylmalate = (2S)-2-isopropylmalate. It participates in amino-acid biosynthesis; L-leucine biosynthesis; L-leucine from 3-methyl-2-oxobutanoate: step 2/4. In terms of biological role, catalyzes the isomerization between 2-isopropylmalate and 3-isopropylmalate, via the formation of 2-isopropylmaleate. The protein is 3-isopropylmalate dehydratase large subunit of Synechocystis sp. (strain ATCC 27184 / PCC 6803 / Kazusa).